The primary structure comprises 384 residues: Cell division protein FtsZ (384 aa).

Residues Gly-20 to Asn-24, Gly-107 to Gly-109, Glu-138, Arg-142, and Asn-186 each bind GTP.

It belongs to the FtsZ family. Homodimer. Polymerizes to form a dynamic ring structure in a strictly GTP-dependent manner. Interacts directly with several other division proteins.

It is found in the cytoplasm. Functionally, essential cell division protein that forms a contractile ring structure (Z ring) at the future cell division site. The regulation of the ring assembly controls the timing and the location of cell division. One of the functions of the FtsZ ring is to recruit other cell division proteins to the septum to produce a new cell wall between the dividing cells. Binds GTP and shows GTPase activity. The protein is Cell division protein FtsZ of Buchnera aphidicola subsp. Schizaphis graminum (strain Sg).